A 141-amino-acid polypeptide reads, in one-letter code: Cystatin (141 aa).

An N-terminal signal peptide occupies residues 1-26; the sequence is MVHSQLPVAASLRLLCALLLLPSATM. Positions 29 to 129 constitute a Cystatin domain; the sequence is GGLSPRSVTD…CRFQVWSRPW (101 aa). Residues 73–77 carry the Secondary area of contact motif; it reads QVVAG. Disulfide bonds link Cys91–Cys107 and Cys120–Cys140.

The protein belongs to the cystatin family. In terms of tissue distribution, expressed by the venom gland at an extremely low level (at protein level).

The protein localises to the secreted. In terms of biological role, inhibits various C1 cysteine proteases including cathepsin L, papain and cathepsin B. This protein has no toxic activity and its function in the venom is unknown. It may play a role as a housekeeping or regulatory protein. The sequence is that of Cystatin from Cryptophis nigrescens (Eastern small-eyed snake).